The following is a 122-amino-acid chain: Small ribosomal subunit protein uS13 (122 aa).

Residues 95-122 (NLPVRGQRTHTNARTRKGKAKPIAGKKK) are disordered.

It belongs to the universal ribosomal protein uS13 family. As to quaternary structure, part of the 30S ribosomal subunit. Forms a loose heterodimer with protein S19. Forms two bridges to the 50S subunit in the 70S ribosome.

In terms of biological role, located at the top of the head of the 30S subunit, it contacts several helices of the 16S rRNA. In the 70S ribosome it contacts the 23S rRNA (bridge B1a) and protein L5 of the 50S subunit (bridge B1b), connecting the 2 subunits; these bridges are implicated in subunit movement. Contacts the tRNAs in the A and P-sites. This is Small ribosomal subunit protein uS13 from Methylobacterium sp. (strain 4-46).